The sequence spans 311 residues: Putative ankyrin repeat protein RF_0923 (311 aa).

5 ANK repeats span residues 42-71 (IDNT…EQAI), 77-106 (NGNT…PQAI), 112-141 (NGNT…PQAI), 147-176 (NGNT…EQAI), and 182-213 (KGCT…AINH).

The chain is Putative ankyrin repeat protein RF_0923 from Rickettsia felis (strain ATCC VR-1525 / URRWXCal2) (Rickettsia azadi).